A 563-amino-acid chain; its full sequence is Proton channel OTOP2 (563 aa).

The disordered stretch occupies residues 1–20 (MSEELVPHPNESLPGPRASP). The next 12 helical transmembrane spans lie at 30–50 (LLSV…ISGG), 62–82 (VFAL…FYLL), 100–120 (PIWL…MDVF), 137–157 (ILHP…LWIS), 173–193 (LMFT…DESV), 242–262 (FYLY…LYVM), 290–310 (FFAG…VFIL), 325–345 (ALVI…LVSL), 373–393 (LMGA…AVVV), 403–423 (LNLS…VFII), 496–516 (DISL…AFGA), and 528–548 (FYGY…GIFY).

It belongs to the otopetrin family. Expressed at higher level in stomach, testis and olfactory bulb.

It localises to the cell membrane. The enzyme catalyses H(+)(in) = H(+)(out). With respect to regulation, actives at neutral and alkaline extracellular pH, acid extracellular pH appears to inhibit the channel. Insensitive to activation by Zn(2+). Its function is as follows. Proton-selective ion channel open at neutral pH. Actives at neutral and alkaline extracellular pH, likely participates in some alkali-related physiological activities. The protein is Proton channel OTOP2 of Mus musculus (Mouse).